The sequence spans 135 residues: 2-iminobutanoate/2-iminopropanoate deaminase (135 aa).

At Ser-2 the chain carries N-acetylserine. 4 positions are modified to N6-succinyllysine: Lys-13, Lys-60, Lys-67, and Lys-134.

This sequence belongs to the RutC family. In terms of assembly, homotrimer. Interacts with YTHDF2. Expressed predominantly in liver and kidney. Lower levels in lung and brain.

The protein localises to the cytoplasm. The protein resides in the nucleus. It localises to the peroxisome. Its subcellular location is the mitochondrion. The enzyme catalyses 2-iminobutanoate + H2O = 2-oxobutanoate + NH4(+). The catalysed reaction is 2-iminopropanoate + H2O = pyruvate + NH4(+). In terms of biological role, catalyzes the hydrolytic deamination of enamine/imine intermediates that form during the course of normal metabolism. May facilitate the release of ammonia from these potentially toxic reactive metabolites, reducing their impact on cellular components. It may act on enamine/imine intermediates formed by several types of pyridoxal-5'-phosphate-dependent dehydratases including L-threonine dehydratase. Functionally, also promotes endoribonucleolytic cleavage of some transcripts by promoting recruitment of the ribonuclease P/MRP complex. Acts by bridging YTHDF2 and the ribonuclease P/MRP complex. RIDA/HRSP12 binds to N6-methyladenosine (m6A)-containing mRNAs containing a 5'-GGUUC-3' motif: cooperative binding of RIDA/HRSP12 and YTHDF2 to such transcripts lead to recruitment of the ribonuclease P/MRP complex and subsequent endoribonucleolytic cleavage. This is 2-iminobutanoate/2-iminopropanoate deaminase from Mus musculus (Mouse).